The sequence spans 445 residues: Methionine aminopeptidase 2-1 (445 aa).

The tract at residues methionine 1–leucine 86 is disordered. Residues glycine 34–glutamate 46 are compositionally biased toward acidic residues. Basic residues predominate over residues alanine 59–glycine 74. Histidine 198 contacts substrate. Residues aspartate 218, aspartate 229, and histidine 298 each contribute to the a divalent metal cation site. Histidine 306 serves as a coordination point for substrate. A divalent metal cation is bound by residues glutamate 331 and glutamate 426.

Belongs to the peptidase M24A family. Methionine aminopeptidase eukaryotic type 2 subfamily. The cofactor is Co(2+). Zn(2+) is required as a cofactor. Requires Mn(2+) as cofactor. Fe(2+) serves as cofactor.

The protein resides in the cytoplasm. The catalysed reaction is Release of N-terminal amino acids, preferentially methionine, from peptides and arylamides.. Its function is as follows. Cotranslationally removes the N-terminal methionine from nascent proteins. The N-terminal methionine is often cleaved when the second residue in the primary sequence is small and uncharged (Met-Ala-, Cys, Gly, Pro, Ser, Thr, or Val). This Aspergillus flavus (strain ATCC 200026 / FGSC A1120 / IAM 13836 / NRRL 3357 / JCM 12722 / SRRC 167) protein is Methionine aminopeptidase 2-1.